The following is a 295-amino-acid chain: Small ribosomal subunit protein uS2 (295 aa).

Ser-2 carries the post-translational modification N-acetylserine. Ser-43 carries the phosphoserine modification. Lys-52 is modified (N6-acetyllysine). The interaction with PPP1R16B stretch occupies residues 54–113 (TWEKLLLAARAIVAIENPADVSVISSRNTGQRAVLKFAAATGATPIAGRFTPGTFTNQIQ). Position 89 is an N6-acetyllysine; alternate (Lys-89). Lys-89 participates in a covalent cross-link: Glycyl lysine isopeptide (Lys-Gly) (interchain with G-Cter in SUMO2); alternate. Thr-97 carries the post-translational modification Phosphothreonine. 2 laminin-binding regions span residues 161-180 (IPCN…MLAR) and 205-229 (RDPE…EFQG). [DE]-W-[ST] repeat units lie at residues 230–232 (EWT), 247–249 (DWS), 266–268 (DWS), 275–277 (DWS), and 293–295 (EWS). The interval 242-295 (QPEVADWSEGVQVPSVPIQQFPTEDWSAQPTTEDWSAAPTAQATEWVGTTTEWS) is laminin-binding. Residues 266–295 (DWSAQPTTEDWSAAPTAQATEWVGTTTEWS) are disordered.

This sequence belongs to the universal ribosomal protein uS2 family. Monomer (37LRP) and homodimer (67LR). Component of the small ribosomal subunit. Mature ribosomes consist of a small (40S) and a large (60S) subunit. The 40S subunit contains about 33 different proteins and 1 molecule of RNA (18S). The 60S subunit contains about 49 different proteins and 3 molecules of RNA (28S, 5.8S and 5S). Interacts with RPS21. Interacts with several laminins including at least LAMB1. Interacts with MDK. The mature dimeric form interacts with PPP1R16B (via its fourth ankyrin repeat). Interacts with PPP1CA only in the presence of PPP1R16B. Post-translationally, acylated. Acylation may be a prerequisite for conversion of the monomeric 37 kDa laminin receptor precursor (37LRP) to the mature dimeric 67 kDa laminin receptor (67LR), and may provide a mechanism for membrane association. Cleaved by stromelysin-3 (ST3) at the cell surface. Cleavage by stromelysin-3 may be a mechanism to alter cell-extracellular matrix interactions.

The protein localises to the cell membrane. It is found in the cytoplasm. Its subcellular location is the nucleus. In terms of biological role, required for the assembly and/or stability of the 40S ribosomal subunit. Required for the processing of the 20S rRNA-precursor to mature 18S rRNA in a late step of the maturation of 40S ribosomal subunits. Also functions as a cell surface receptor for laminin. Plays a role in cell adhesion to the basement membrane and in the consequent activation of signaling transduction pathways. May play a role in cell fate determination and tissue morphogenesis. Also acts as a receptor for several other ligands, including the pathogenic prion protein, viruses, and bacteria. Acts as a PPP1R16B-dependent substrate of PPP1CA. This is Small ribosomal subunit protein uS2 from Sus scrofa (Pig).